The following is a 101-amino-acid chain: Protein RALF-like 14 (101 aa).

An N-terminal signal peptide occupies residues 1–21; that stretch reads MKLLIFAVIISVVLFPVLVSS. The propeptide at 22 to 56 is removed in mature form; that stretch reads RTIKCDQLSGKCINGEEKEIMNMRLGLDVSSRRIL. A disulfide bridge connects residues Cys90 and Cys96.

Belongs to the plant rapid alkalinization factor (RALF) family. Proteolytically cleaved, probably by S1P, a subtilisin-like serine protease (subtilase).

It localises to the secreted. Its function is as follows. Cell signaling peptide that may regulate plant stress, growth, and development. Mediates a rapid alkalinization of extracellular space by mediating a transient increase in the cytoplasmic Ca(2+) concentration leading to a calcium-dependent signaling events through a cell surface receptor and a concomitant activation of some intracellular mitogen-activated protein kinases. This Arabidopsis thaliana (Mouse-ear cress) protein is Protein RALF-like 14 (RALFL14).